We begin with the raw amino-acid sequence, 490 residues long: Katanin p60 ATPase-containing subunit A-like 1 (490 aa).

M1 carries the N-acetylmethionine modification. The interval 95 to 184 is disordered; it reads DPAVWPPPVP…DGEMPKFDGA (90 aa). Residues 116-127 are compositionally biased toward basic and acidic residues; that stretch reads PNREVRPLRKEM. Residues 128–139 are compositionally biased toward low complexity; sequence AGVGARGPVGRA. Residues 143-169 are compositionally biased toward basic and acidic residues; that stretch reads SKSEKPSTSRDKDYRARGRDDKGRKNM. Residue S174 is modified to Phosphoserine. 248 to 255 is a binding site for ATP; that stretch reads GPPGTGKT.

This sequence belongs to the AAA ATPase family. Katanin p60 subunit A1 subfamily. A-like 1 sub-subfamily. As to quaternary structure, interacts with KATNB1 and KATNBL1. Expressed in testis, restricted to Sertoli cells (at protein level).

The protein localises to the cytoplasm. It is found in the cytoskeleton. Its subcellular location is the spindle pole. It localises to the spindle. It catalyses the reaction n ATP + n H2O + a microtubule = n ADP + n phosphate + (n+1) alpha/beta tubulin heterodimers.. In terms of biological role, regulates microtubule dynamics in Sertoli cells, a process that is essential for spermiogenesis and male fertility. Severs microtubules in an ATP-dependent manner, promoting rapid reorganization of cellular microtubule arrays. Has microtubule-severing activity in vitro. This chain is Katanin p60 ATPase-containing subunit A-like 1, found in Homo sapiens (Human).